The primary structure comprises 2162 residues: Polyketide synthase 1 (2162 aa).

The segment at 19–264 (FVFGDQTSCN…TPLAVHAPYH (246 aa)) is N-terminal acylcarrier protein transacylase domain (SAT). Positions 397 to 841 (DSKIAIIGMS…GGNTALLVED (445 aa)) constitute a Ketosynthase family 3 (KS3) domain. Residues Cys-578, His-713, and His-757 each act as for beta-ketoacyl synthase activity in the active site. Positions 941–1245 (AFVFSGQGSQ…PSLMRSHDGW (305 aa)) are malonyl-CoA:ACP transacylase (MAT) domain. Ser-1030 functions as the For acyl/malonyl transferase activity in the catalytic mechanism. Residues 1322–1636 (TASVHRIVRE…RRVLDAAMPA (315 aa)) form a product template (PT) domain region. An N-terminal hotdog fold region spans residues 1326–1459 (HRIVRESVDR…SSLCFGESRA (134 aa)). The 306-residue stretch at 1326 to 1631 (HRIVRESVDR…FQGVPRRVLD (306 aa)) folds into the PKS/mFAS DH domain. His-1358 functions as the Proton acceptor; for dehydratase activity in the catalytic mechanism. The tract at residues 1486 to 1631 (LNSRLSSGVI…FQGVPRRVLD (146 aa)) is C-terminal hotdog fold. Asp-1545 acts as the Proton donor; for dehydratase activity in catalysis. A disordered region spans residues 1633 to 1669 (AMPAPKSPNKTRDHASPNATISRAKPPQGSSPASSAQ). Residues 1658-1669 (PPQGSSPASSAQ) are compositionally biased toward low complexity. A Carrier 1 domain is found at 1692–1766 (IDPMHAVLRI…DFAVHLGLDT (75 aa)). The residue at position 1726 (Ser-1726) is an O-(pantetheine 4'-phosphoryl)serine. Positions 1772–1783 (SSGESNVSGGVS) are enriched in low complexity. The disordered stretch occupies residues 1772-1809 (SSGESNVSGGVSPRSDSVAAMSSDVTTPPAQSPLGSMS). Polar residues predominate over residues 1794 to 1809 (SDVTTPPAQSPLGSMS). A Carrier 2 domain is found at 1807–1884 (SMSSSPCEDL…SFKHVFEQEI (78 aa)). Ser-1844 carries the post-translational modification O-(pantetheine 4'-phosphoryl)serine. The interval 1896–2160 (LKKYHATSTL…ERVAAFIRSA (265 aa)) is thioesterase (TE) domain. The active-site For thioesterase activity is Ser-1987.

In terms of biological role, polyketide synthase; part of the Pks1 gene cluster that mediates the biosynthesis of an anthraquinone derivative pigment that contributes to conidial pigmentation that provides protection from UV radiation, heat and cold stress. The polyketide synthase Pks1 produces 1-acetyl-2,4,6,8-tetrahydroxy-9,10-anthraquinone though condensation of acetyl-CoA with malonyl-CoA. The dehydratase EthD and the laccase Mlac1 further convert the anthraquinone derivative into the final conidial pigment. The polypeptide is Polyketide synthase 1 (Metarhizium album (strain ARSEF 1941)).